An 84-amino-acid polypeptide reads, in one-letter code: Acyl-CoA-binding protein (84 aa).

Residues 1–84 (MTTFEEAAQK…LYEQLATKYA (84 aa)) form the ACB domain. An acyl-CoA contacts are provided by residues Lys-12, 27–31 (YGLYK), Lys-53, and Tyr-72.

This sequence belongs to the ACBP family. As to quaternary structure, interacts with dhkA.

Its function is as follows. Binds to acyl-CoA. Processed into the SDF-2 (spore differentiation factor 2) a peptide which triggers sporulation. SDF-2 appears to stimulate prestalk cells to release additional SDF-2 by acting through a signal transduction pathway that also involves dhkA, regA and PKA. Induces encapsulation of prespore cells in a dhkA-dependent manner. GABA induces the release of acbA from prespore cells and induces the exposure of tagC on the surface of prestalk cells where it can convert acbA to SDF-2. Glutamate acts as a competitive inhibitor and is also able to inhibit induction of sporulation by SDF-2. The sequence is that of Acyl-CoA-binding protein (acbA) from Dictyostelium discoideum (Social amoeba).